The primary structure comprises 574 residues: ATP synthase subunit beta, mitochondrial (574 aa).

The transit peptide at 1–26 (MLSSVRLAALRAGKTNSVFQAVRAFA) directs the protein to the mitochondrion. 183 to 190 (GGAGVGKT) contacts ATP.

This sequence belongs to the ATPase alpha/beta chains family. In terms of assembly, F-type ATPases have 2 components, CF(1) - the catalytic core - and CF(0) - the membrane proton channel. CF(1) has five subunits: alpha(3), beta(3), gamma(1), delta(1), epsilon(1). CF(0) has three main subunits: a, b and c.

Its subcellular location is the mitochondrion. It localises to the mitochondrion inner membrane. It carries out the reaction ATP + H2O + 4 H(+)(in) = ADP + phosphate + 5 H(+)(out). In terms of biological role, mitochondrial membrane ATP synthase (F(1)F(0) ATP synthase or Complex V) produces ATP from ADP in the presence of a proton gradient across the membrane which is generated by electron transport complexes of the respiratory chain. F-type ATPases consist of two structural domains, F(1) - containing the extramembraneous catalytic core, and F(0) - containing the membrane proton channel, linked together by a central stalk and a peripheral stalk. During catalysis, ATP synthesis in the catalytic domain of F(1) is coupled via a rotary mechanism of the central stalk subunits to proton translocation. Subunits alpha and beta form the catalytic core in F(1). Rotation of the central stalk against the surrounding alpha(3)beta(3) subunits leads to hydrolysis of ATP in three separate catalytic sites on the beta subunits. In Chlamydomonas reinhardtii (Chlamydomonas smithii), this protein is ATP synthase subunit beta, mitochondrial (ATP2).